Reading from the N-terminus, the 137-residue chain is Cofilin (137 aa).

The region spanning 5-135 (GVKVSPECLE…AYETVLEKVT (131 aa)) is the ADF-H domain.

This sequence belongs to the actin-binding proteins ADF family.

The protein localises to the cytoplasm. It localises to the cytoskeleton. The protein resides in the nucleus matrix. In terms of biological role, controls reversibly actin polymerization and depolymerization in a pH-sensitive manner. It has the ability to bind G- and F-actin in a 1:1 ratio of cofilin to actin. Binding to F-actin is regulated by tropomyosin. It is the major component of intranuclear and cytoplasmic actin rods. Required for accumulation of actin at the cell division site via depolymerizing actin at the cell ends. In association with myosin II has a role in the assembly of the contractile ring via severing actin filaments. Involved in the maintenance of the contractile ring once formed. In association with profilin and capping protein, has a role in the mitotic reorganization of the actin cytoskeleton. Severs actin filaments (F-actin). In Schizosaccharomyces pombe (strain 972 / ATCC 24843) (Fission yeast), this protein is Cofilin (cof1).